The following is a 267-amino-acid chain: NAD kinase (267 aa).

Catalysis depends on aspartate 45, which acts as the Proton acceptor. NAD(+)-binding positions include 45–46, 123–124, arginine 149, aspartate 151, alanine 186, and asparagine 226; these read DG and NE.

The protein belongs to the NAD kinase family. A divalent metal cation serves as cofactor.

It localises to the cytoplasm. It catalyses the reaction NAD(+) + ATP = ADP + NADP(+) + H(+). In terms of biological role, involved in the regulation of the intracellular balance of NAD and NADP, and is a key enzyme in the biosynthesis of NADP. Catalyzes specifically the phosphorylation on 2'-hydroxyl of the adenosine moiety of NAD to yield NADP. The sequence is that of NAD kinase from Shouchella clausii (strain KSM-K16) (Alkalihalobacillus clausii).